The following is a 259-amino-acid chain: Deoxyribose-phosphate aldolase (259 aa).

Catalysis depends on D102, which acts as the Proton donor/acceptor. The active-site Schiff-base intermediate with acetaldehyde is K167. K201 (proton donor/acceptor) is an active-site residue.

Belongs to the DeoC/FbaB aldolase family. DeoC type 2 subfamily.

It localises to the cytoplasm. It carries out the reaction 2-deoxy-D-ribose 5-phosphate = D-glyceraldehyde 3-phosphate + acetaldehyde. It functions in the pathway carbohydrate degradation; 2-deoxy-D-ribose 1-phosphate degradation; D-glyceraldehyde 3-phosphate and acetaldehyde from 2-deoxy-alpha-D-ribose 1-phosphate: step 2/2. Functionally, catalyzes a reversible aldol reaction between acetaldehyde and D-glyceraldehyde 3-phosphate to generate 2-deoxy-D-ribose 5-phosphate. The polypeptide is Deoxyribose-phosphate aldolase (Shigella boydii serotype 4 (strain Sb227)).